Consider the following 277-residue polypeptide: Phosphonates import ATP-binding protein PhnC 2 (277 aa).

Residues Ile5 to Ala253 enclose the ABC transporter domain. Gly37–Ser44 lines the ATP pocket.

This sequence belongs to the ABC transporter superfamily. Phosphonates importer (TC 3.A.1.9.1) family. In terms of assembly, the complex is composed of two ATP-binding proteins (PhnC), two transmembrane proteins (PhnE) and a solute-binding protein (PhnD).

It is found in the cell inner membrane. The catalysed reaction is phosphonate(out) + ATP + H2O = phosphonate(in) + ADP + phosphate + H(+). In terms of biological role, part of the ABC transporter complex PhnCDE involved in phosphonates import. Responsible for energy coupling to the transport system. This chain is Phosphonates import ATP-binding protein PhnC 2, found in Pseudomonas syringae pv. syringae (strain B728a).